The sequence spans 132 residues: Small ribosomal subunit protein uS8 (132 aa).

This sequence belongs to the universal ribosomal protein uS8 family. In terms of assembly, part of the 30S ribosomal subunit. Contacts proteins S5 and S12.

One of the primary rRNA binding proteins, it binds directly to 16S rRNA central domain where it helps coordinate assembly of the platform of the 30S subunit. The sequence is that of Small ribosomal subunit protein uS8 from Desulfitobacterium hafniense (strain DSM 10664 / DCB-2).